Reading from the N-terminus, the 872-residue chain is DNA mismatch repair protein MutS (872 aa).

Position 626–633 (626–633) interacts with ATP; sequence GPNMAGKS.

This sequence belongs to the DNA mismatch repair MutS family.

In terms of biological role, this protein is involved in the repair of mismatches in DNA. It is possible that it carries out the mismatch recognition step. This protein has a weak ATPase activity. This chain is DNA mismatch repair protein MutS, found in Chlorobium phaeobacteroides (strain DSM 266 / SMG 266 / 2430).